Consider the following 495-residue polypeptide: UDP-N-acetylmuramoyl-L-alanyl-D-glutamate--2,6-diaminopimelate ligase (495 aa).

UDP-N-acetyl-alpha-D-muramoyl-L-alanyl-D-glutamate-binding positions include L27, S29, and 44-46 (HQA). 116 to 122 (GTNGKTT) is a binding site for ATP. UDP-N-acetyl-alpha-D-muramoyl-L-alanyl-D-glutamate-binding positions include N157, 158 to 159 (TT), S185, Q191, and R193. K225 carries the N6-carboxylysine modification. Meso-2,6-diaminopimelate is bound by residues R390, 414–417 (DNPR), G465, and E469. Residues 414–417 (DNPR) carry the Meso-diaminopimelate recognition motif motif.

The protein belongs to the MurCDEF family. MurE subfamily. It depends on Mg(2+) as a cofactor. Carboxylation is probably crucial for Mg(2+) binding and, consequently, for the gamma-phosphate positioning of ATP.

It localises to the cytoplasm. The catalysed reaction is UDP-N-acetyl-alpha-D-muramoyl-L-alanyl-D-glutamate + meso-2,6-diaminopimelate + ATP = UDP-N-acetyl-alpha-D-muramoyl-L-alanyl-gamma-D-glutamyl-meso-2,6-diaminopimelate + ADP + phosphate + H(+). The protein operates within cell wall biogenesis; peptidoglycan biosynthesis. Its function is as follows. Catalyzes the addition of meso-diaminopimelic acid to the nucleotide precursor UDP-N-acetylmuramoyl-L-alanyl-D-glutamate (UMAG) in the biosynthesis of bacterial cell-wall peptidoglycan. The chain is UDP-N-acetylmuramoyl-L-alanyl-D-glutamate--2,6-diaminopimelate ligase from Enterobacter sp. (strain 638).